Here is a 447-residue protein sequence, read N- to C-terminus: tRNA threonylcarbamoyladenosine dehydratase 2 (447 aa).

The next 3 helical transmembrane spans lie at 9–29 (LITA…YAWT), 86–106 (NQYV…NSLV), and 294–314 (ILPV…TWIL).

Belongs to the HesA/MoeB/ThiF family.

The protein resides in the mitochondrion outer membrane. Catalyzes the ATP-dependent dehydration of threonylcarbamoyladenosine at position 37 (t(6)A37) to form cyclic t(6)A37 (ct(6)A37) in tRNAs that read codons beginning with adenine. In Saccharomyces cerevisiae (strain ATCC 204508 / S288c) (Baker's yeast), this protein is tRNA threonylcarbamoyladenosine dehydratase 2 (TCD2).